The chain runs to 95 residues: Defensin alpha 4 (95 aa).

An N-terminal signal peptide occupies residues 1–19 (MRTLALLAAILLVALQAQA). The propeptide occupies 20 to 62 (EHISVSIDEVVDQQPPQAEDQDVAIYVKEHESSALEALGVKAG). Cystine bridges form between Cys-65-Cys-93, Cys-67-Cys-82, and Cys-72-Cys-92.

It belongs to the alpha-defensin family.

Its subcellular location is the secreted. Host-defense peptide that has antimicrobial activity. Inhibits corticotropin (ACTH)-stimulated corticosterone production (in vitro). This Oryctolagus cuniculus (Rabbit) protein is Defensin alpha 4.